The sequence spans 210 residues: Probable nicotinate-nucleotide adenylyltransferase (210 aa).

This sequence belongs to the NadD family.

It carries out the reaction nicotinate beta-D-ribonucleotide + ATP + H(+) = deamido-NAD(+) + diphosphate. The protein operates within cofactor biosynthesis; NAD(+) biosynthesis; deamido-NAD(+) from nicotinate D-ribonucleotide: step 1/1. In terms of biological role, catalyzes the reversible adenylation of nicotinate mononucleotide (NaMN) to nicotinic acid adenine dinucleotide (NaAD). This Methylococcus capsulatus (strain ATCC 33009 / NCIMB 11132 / Bath) protein is Probable nicotinate-nucleotide adenylyltransferase.